A 424-amino-acid polypeptide reads, in one-letter code: Glutamyl-tRNA reductase (424 aa).

Substrate is bound by residues 49–52 (TCNR), S108, 113–115 (EPQ), and Q119. The Nucleophile role is filled by C50. An NADP(+)-binding site is contributed by 188 to 193 (GAGETI).

The protein belongs to the glutamyl-tRNA reductase family. Homodimer.

The catalysed reaction is (S)-4-amino-5-oxopentanoate + tRNA(Glu) + NADP(+) = L-glutamyl-tRNA(Glu) + NADPH + H(+). Its pathway is porphyrin-containing compound metabolism; protoporphyrin-IX biosynthesis; 5-aminolevulinate from L-glutamyl-tRNA(Glu): step 1/2. In terms of biological role, catalyzes the NADPH-dependent reduction of glutamyl-tRNA(Glu) to glutamate 1-semialdehyde (GSA). The protein is Glutamyl-tRNA reductase of Hahella chejuensis (strain KCTC 2396).